The following is a 251-amino-acid chain: Small ribosomal subunit protein uS3 (251 aa).

Residues 22 to 93 (LNEFFTRELA…GIAIYAERVE (72 aa)) enclose the KH type-2 domain. A disordered region spans residues 223–251 (TVKSYKQTAEDETETDAPVEAEAEVEATA). The segment covering 232–251 (EDETETDAPVEAEAEVEATA) has biased composition (acidic residues).

It belongs to the universal ribosomal protein uS3 family. As to quaternary structure, component of the small ribosomal subunit. Mature ribosomes consist of a small (40S) and a large (60S) subunit. The 40S subunit contains about 32 different proteins and 1 molecule of RNA (18S). The 60S subunit contains 45 different proteins and 3 molecules of RNA (25S, 5.8S and 5S).

The protein localises to the cytoplasm. Its function is as follows. Component of the ribosome, a large ribonucleoprotein complex responsible for the synthesis of proteins in the cell. The small ribosomal subunit (SSU) binds messenger RNAs (mRNAs) and translates the encoded message by selecting cognate aminoacyl-transfer RNA (tRNA) molecules. The large subunit (LSU) contains the ribosomal catalytic site termed the peptidyl transferase center (PTC), which catalyzes the formation of peptide bonds, thereby polymerizing the amino acids delivered by tRNAs into a polypeptide chain. The nascent polypeptides leave the ribosome through a tunnel in the LSU and interact with protein factors that function in enzymatic processing, targeting, and the membrane insertion of nascent chains at the exit of the ribosomal tunnel. The protein is Small ribosomal subunit protein uS3 (RPS3) of Candida albicans (strain SC5314 / ATCC MYA-2876) (Yeast).